The following is a 619-amino-acid chain: Keratin, type II cytoskeletal 1 (619 aa).

The tract at residues 1-180 is head; it reads MSRHFSSRSG…DPEIQKVKTR (180 aa). The residue at position 12 (Arg-12) is an Omega-N-methylarginine. Ser-18 and Ser-21 each carry phosphoserine. Positions 28–49 are disordered; sequence QRRTTSSSVRHSGGGGGRFSGG. The segment covering 39–49 has biased composition (gly residues); that stretch reads SGGGGGRFSGG. The residue at position 45 (Arg-45) is an Omega-N-methylarginine. Position 68 is a phosphoserine (Ser-68). Positions 173 to 477 form a coiled coil; the sequence is EIQKVKTRER…ELMNTKLALD (305 aa). The segment at 181 to 216 is coil 1A; it reads EREQIKSLNNQFASFIDKVRFLEQQNQVLQTKWELL. Positions 181-494 constitute an IF rod domain; it reads EREQIKSLNN…TLLEGEESRM (314 aa). The tract at residues 217-235 is linker 1; it reads QQVDTSTRTHSLEPYFENY. The coil 1B stretch occupies residues 236-327; that stretch reads ISNLRRRVDQ…TLYQAELSQM (92 aa). Lys-277 is subject to N6,N6-dimethyllysine. The segment at 328–351 is linker 12; that stretch reads QTQISETNVILSMDNNRSLDLDSI. Ser-345 carries the phosphoserine modification. The tract at residues 352–490 is coil 2; the sequence is ISEVKAQYEE…ATYRTLLEGE (139 aa). Residues 491 to 619 are tail; sequence ESRMSGECAP…VSTSYSRAVR (129 aa). Residues Arg-519 and Arg-575 each carry the omega-N-methylarginine modification. The disordered stretch occupies residues 559-619; it reads GGGGGGYGSS…VSTSYSRAVR (61 aa). The span at 573–595 shows a compositional bias: gly residues; the sequence is GHRGGSGGGSRSGGSSGGRGSSS. The segment covering 596–606 has biased composition (low complexity); it reads GGIKTSSGSSS. Over residues 607–619 the composition is skewed to polar residues; that stretch reads VKFVSTSYSRAVR.

This sequence belongs to the intermediate filament family. In terms of assembly, heterotetramer of two type I and two type II keratins. Heterodimer with KRT10. Two heterodimers of KRT1 and KRT10 form a heterotetramer. Forms a heterodimer with KRT14; the interaction is more abundant in the absence of KRT5. Interacts with ITGB1 in the presence of RACK1 and SRC, and with RACK1. Interacts with C1QBP; the association represents a cell surface kininogen receptor. Interacts with EPPK1; interaction is dependent of higher-order structure of intermediate filament. In terms of processing, undergoes deimination of some arginine residues (citrullination).

The protein resides in the cell membrane. It localises to the cytoplasm. Its function is as follows. May regulate the activity of kinases such as PKC and SRC via binding to integrin beta-1 (ITB1) and the receptor of activated protein C kinase 1 (RACK1). In complex with C1QBP is a high affinity receptor for kininogen-1/HMWK. The sequence is that of Keratin, type II cytoskeletal 1 from Canis lupus familiaris (Dog).